The chain runs to 183 residues: 2-hydroxy-1,4-benzoquinone reductase (183 aa).

FMN contacts are provided by residues 11-18 (SLRRDSFN), 77-80 (EYNR), and Ser113.

This sequence belongs to the SsuE family. Homotetramer. The cofactor is FMN.

The enzyme catalyses 2-hydroxy-1,4-benzoquinone + NADH + 2 H(+) = benzene-1,2,4-triol + NAD(+). Its function is as follows. Involved in the metabolism of 4-aminophenol. Catalyzes the reduction of the auto-oxidation product 2-hydroxy-1,4-benzoquinone back to hydroxyquinol. Has a broad substrate specificity toward benzoquinones, converting them to the corresponding 1,4-benzenediols. The chain is 2-hydroxy-1,4-benzoquinone reductase from Burkholderia sp.